The sequence spans 156 residues: Cyanate hydratase (156 aa).

Residues Arg-96, Glu-99, and Ser-122 contribute to the active site.

This sequence belongs to the cyanase family.

The enzyme catalyses cyanate + hydrogencarbonate + 3 H(+) = NH4(+) + 2 CO2. Its function is as follows. Catalyzes the reaction of cyanate with bicarbonate to produce ammonia and carbon dioxide. The polypeptide is Cyanate hydratase (Mycobacteroides abscessus (strain ATCC 19977 / DSM 44196 / CCUG 20993 / CIP 104536 / JCM 13569 / NCTC 13031 / TMC 1543 / L948) (Mycobacterium abscessus)).